We begin with the raw amino-acid sequence, 450 residues long: Na(+)/H(+) antiporter NhaA 1 (450 aa).

Helical transmembrane passes span 35 to 55 (SSLFLLFATIIALWWANSDYA), 79 to 99 (LKHIINDGLMVIFFFLLGLEI), 117 to 137 (LIICAMGGMVCPALIYSGFNW), 143 to 163 (IGWGIPMATDTAFALGVLTMV), 173 to 193 (AFIVGLAIVDDVGAILVIAIF), 198 to 218 (ISLMHLLSACALIGFLGVANY), 224 to 244 (PLFYFIIGVAAWWAMLKSGVH), 320 to 340 (LPVVLFILPLFALANAGVVIN), 356 to 376 (IISGLILGKLIGISGACWFAL), 392 to 412 (VIGASLIAGIGFTMSTFIATL), and 423 to 443 (VAKTSILLASVLTAILGLLYL).

The protein belongs to the NhaA Na(+)/H(+) (TC 2.A.33) antiporter family.

The protein resides in the cell inner membrane. The enzyme catalyses Na(+)(in) + 2 H(+)(out) = Na(+)(out) + 2 H(+)(in). Its function is as follows. Na(+)/H(+) antiporter that extrudes sodium in exchange for external protons. The protein is Na(+)/H(+) antiporter NhaA 1 of Shewanella denitrificans (strain OS217 / ATCC BAA-1090 / DSM 15013).